The sequence spans 656 residues: UvrABC system protein C (656 aa).

The GIY-YIG domain occupies 16–95 (TDPGVYRFRD…IKEYSPRFNV (80 aa)). In terms of domain architecture, UVR spans 208-243 (GRFLRQLEAEMKQAAAAQEYERAARIRDDIQALRTV).

This sequence belongs to the UvrC family. As to quaternary structure, interacts with UvrB in an incision complex.

It is found in the cytoplasm. The UvrABC repair system catalyzes the recognition and processing of DNA lesions. UvrC both incises the 5' and 3' sides of the lesion. The N-terminal half is responsible for the 3' incision and the C-terminal half is responsible for the 5' incision. This is UvrABC system protein C from Thermobifida fusca (strain YX).